The sequence spans 203 residues: 2-hydroxychromene-2-carboxylate isomerase (203 aa).

Catalysis depends on serine 11, which acts as the Nucleophile. Serine 11 provides a ligand contact to glutathione. Residues lysine 43, asparagine 53 to arginine 54, and tyrosine 84 contribute to the substrate site. Glutathione-binding positions include valine 168 and tryptophan 179 to aspartate 182.

This sequence belongs to the GST superfamily. NadH family. The cofactor is glutathione.

The enzyme catalyses 2-hydroxychromene-2-carboxylate = (3E)-4-(2-hydroxyphenyl)-2-oxobut-3-enoate. It participates in aromatic compound metabolism; naphthalene degradation. In terms of biological role, involved in the naphthalene catabolic pathway. Catalyzes the reversible glutathione-dependent isomerization of 2-hydroxychromene-2-carboxylate (HCCA) to trans-O-hydroxybenzylidenepyruvate (THBPA). The protein is 2-hydroxychromene-2-carboxylate isomerase (nahD) of Pseudomonas putida (Arthrobacter siderocapsulatus).